The primary structure comprises 138 residues: Flagellar basal body rod protein FlgB (138 aa).

This sequence belongs to the flagella basal body rod proteins family. As to quaternary structure, the basal body constitutes a major portion of the flagellar organelle and consists of a number of rings mounted on a central rod. In Gram-negative bacteria, at least four rings, L, P, S and M are present, whereas Gram-positive bacteria lack the L and P rings. The rod consists of about 26 subunits of FlgG in the distal portion, and FlgB, FlgC and FlgF build up the proximal portion of the rod with about 6 subunits each. Rod assembly occurs by export via the flagellum-specific pathway of its constituent proteins and by their incorporation into the rod structure in the probable order of FlgB, FlgC, FlgF and FlgG. Another protein, FliE, also assembles onto the stable rod structure.

It is found in the bacterial flagellum basal body. Its function is as follows. Structural component of flagellum, the bacterial motility apparatus. Part of the rod structure of flagellar basal body. The sequence is that of Flagellar basal body rod protein FlgB (flgB) from Escherichia coli (strain K12).